A 665-amino-acid chain; its full sequence is Macrolide export ATP-binding/permease protein MacB (665 aa).

In terms of domain architecture, ABC transporter spans 17–255 (MQVKGLIREF…VAQFSSIIDK (239 aa)). 53–60 (GQSGSGKS) provides a ligand contact to ATP. The next 4 membrane-spanning stretches (helical) occupy residues 287 to 307 (LLTM…VGLG), 544 to 564 (IAII…LVSV), 588 to 608 (FLIE…GMAF), and 630 to 650 (SIIA…FLPA).

The protein belongs to the ABC transporter superfamily. Macrolide exporter (TC 3.A.1.122) family. In terms of assembly, homodimer. Part of the tripartite efflux system MacAB-TolC, which is composed of an inner membrane transporter, MacB, a periplasmic membrane fusion protein, MacA, and an outer membrane component, TolC. The complex forms a large protein conduit and can translocate molecules across both the inner and outer membranes. Interacts with MacA.

Its subcellular location is the cell inner membrane. In terms of biological role, part of the tripartite efflux system MacAB-TolC. MacB is a non-canonical ABC transporter that contains transmembrane domains (TMD), which form a pore in the inner membrane, and an ATP-binding domain (NBD), which is responsible for energy generation. Confers resistance against macrolides. In Psychrobacter arcticus (strain DSM 17307 / VKM B-2377 / 273-4), this protein is Macrolide export ATP-binding/permease protein MacB.